Here is a 776-residue protein sequence, read N- to C-terminus: Acetone carboxylase alpha subunit (776 aa).

Heterohexamer of two alpha, two beta and two gamma subunits. It depends on Fe cation as a cofactor. Requires Mg(2+) as cofactor. The cofactor is Zn(2+). The N-terminus is blocked.

The catalysed reaction is acetone + hydrogencarbonate + 2 ATP + 3 H2O = acetoacetate + 2 AMP + 4 phosphate + 4 H(+). In terms of biological role, catalyzes the carboxylation of acetone to form acetoacetate. Has a reduced activity on butanone, and no activity on 2-pentatone, 3-pentatone, 2-hexanone, chloroacetone, pyruvate, phosphoenolpyruvate, acetaldehyde, propionaldehyde and propylene oxide. The chain is Acetone carboxylase alpha subunit from Xanthobacter autotrophicus (strain ATCC BAA-1158 / Py2).